The sequence spans 160 residues: Zinc finger A20 and AN1 domain-containing stress-associated protein 5 (160 aa).

Residues 20-54 (TTTTTLCTNNCGVTANPATNNMCQKCFNASLVSAA) form an A20-type zinc finger. Residues C26, C30, C42, C45, C101, C104, C115, C117, C122, H125, H131, and C133 each contribute to the Zn(2+) site. The AN1-type zinc-finger motif lies at 95–141 (QQIVNRCSGCRKKVGLTGFRCRCGELFCSEHRYSDRHDCSYDYKTAG).

May be involved in environmental stress response. The sequence is that of Zinc finger A20 and AN1 domain-containing stress-associated protein 5 (SAP5) from Arabidopsis thaliana (Mouse-ear cress).